The primary structure comprises 310 residues: Protein LRATD2 (310 aa).

Residues 1–76 (MGNQVEKLTH…PPPQPQPYDP (76 aa)) are disordered. Positions 54–64 (PDGGGLPDGGD) are enriched in gly residues. Pro residues predominate over residues 65-74 (GPPPPQPQPY). An LRAT domain is found at 122–217 (VEFVSQAQYP…CRYGKREFKI (96 aa)). A disordered region spans residues 274-310 (HPAEPEEGDSNVARTTPPPGRPPAPSSEEEDGEAVAH). Pro residues predominate over residues 289 to 298 (TPPPGRPPAP). The span at 300-310 (SEEEDGEAVAH) shows a compositional bias: acidic residues.

It belongs to the LRATD family. In terms of tissue distribution, expressed in esophageal squamous cell carcinomas.

The protein is Protein LRATD2 of Homo sapiens (Human).